The sequence spans 1086 residues: Endo-1,4-beta-xylanase C (1086 aa).

An N-terminal signal peptide occupies residues 1–31 (MRGKWLRLCLAAVLIVSLLPGLGAGEWKASA). 2 CBM-cenC domains span residues 35 to 183 (GDIL…IRLV) and 197 to 359 (GQAL…ITAT). One can recognise a GH10 domain in the interval 365–710 (EKNIPDLAKK…KPAYWALVDP (346 aa)). E502 functions as the Proton donor in the catalytic mechanism. D556 is a catalytic residue. E620 (nucleophile) is an active-site residue.

It belongs to the glycosyl hydrolase 10 (cellulase F) family.

The catalysed reaction is Endohydrolysis of (1-&gt;4)-beta-D-xylosidic linkages in xylans.. It participates in glycan degradation; xylan degradation. In terms of biological role, endoxylanase with high hydrolytic activity on birchwood and oat spelt xylan. Xylotetraose, xylotriose, xylobiose and xylose are the main products from birchwood xylan hydrolysis. Shows increasing activity on xylo-oligosaccharides of increasing length. Displays very low hydrolytic activity on Avicel, carboxymethylcellulose (CMC) and p-nitrophenyl-beta-xylopyranoside. Also shows transxylosidase activity, allowing the formation of xylo-oligosaccharides of higher degree of polymerization than the starting substrate. In Paenibacillus barcinonensis, this protein is Endo-1,4-beta-xylanase C (xynC).